Here is a 484-residue protein sequence, read N- to C-terminus: Glutamate--tRNA ligase (484 aa).

The short motif at 11–21 (PSPTGLLHIGN) is the 'HIGH' region element. The short motif at 255–259 (KLSKR) is the 'KMSKS' region element. Lys-258 is an ATP binding site.

The protein belongs to the class-I aminoacyl-tRNA synthetase family. Glutamate--tRNA ligase type 1 subfamily. As to quaternary structure, monomer.

It localises to the cytoplasm. It catalyses the reaction tRNA(Glu) + L-glutamate + ATP = L-glutamyl-tRNA(Glu) + AMP + diphosphate. Catalyzes the attachment of glutamate to tRNA(Glu) in a two-step reaction: glutamate is first activated by ATP to form Glu-AMP and then transferred to the acceptor end of tRNA(Glu). This chain is Glutamate--tRNA ligase, found in Streptococcus agalactiae serotype Ia (strain ATCC 27591 / A909 / CDC SS700).